The primary structure comprises 283 residues: Peroxisomal membrane protein PEX18 (283 aa).

The segment at 179-201 (SSLEEDVHTEEENSGTSLEDEET) is disordered. Residues 180 to 200 (SLEEDVHTEEENSGTSLEDEE) are compositionally biased toward acidic residues.

Interacts with PEX7; The interaction with PEX7 stabilizes PEX18. Interacts with PEX13. Post-translationally, ubiquitinated in a UBC4/UBC5 dependent manner.

It localises to the cytoplasm. Its subcellular location is the peroxisome membrane. Involved in peroxisome biogenesis and the import of peroxisomal matrix proteins that contain the peroxisomal targeting sequence PTS2. Required for peroxisomal targeting of PEX7 and growth on oleate. This Saccharomyces cerevisiae (strain ATCC 204508 / S288c) (Baker's yeast) protein is Peroxisomal membrane protein PEX18 (PEX18).